The primary structure comprises 477 residues: Aspartyl/glutamyl-tRNA(Asn/Gln) amidotransferase subunit B (477 aa).

It belongs to the GatB/GatE family. GatB subfamily. In terms of assembly, heterotrimer of A, B and C subunits.

The enzyme catalyses L-glutamyl-tRNA(Gln) + L-glutamine + ATP + H2O = L-glutaminyl-tRNA(Gln) + L-glutamate + ADP + phosphate + H(+). The catalysed reaction is L-aspartyl-tRNA(Asn) + L-glutamine + ATP + H2O = L-asparaginyl-tRNA(Asn) + L-glutamate + ADP + phosphate + 2 H(+). Functionally, allows the formation of correctly charged Asn-tRNA(Asn) or Gln-tRNA(Gln) through the transamidation of misacylated Asp-tRNA(Asn) or Glu-tRNA(Gln) in organisms which lack either or both of asparaginyl-tRNA or glutaminyl-tRNA synthetases. The reaction takes place in the presence of glutamine and ATP through an activated phospho-Asp-tRNA(Asn) or phospho-Glu-tRNA(Gln). This Thioalkalivibrio sulfidiphilus (strain HL-EbGR7) protein is Aspartyl/glutamyl-tRNA(Asn/Gln) amidotransferase subunit B.